Consider the following 351-residue polypeptide: Histidine protein kinase SaeS (351 aa).

The next 2 helical transmembrane spans lie at 9–29 and 40–60; these read IIIG…IAYI and TLTL…SIFI. An HAMP domain is found at 61–114; that stretch reads NPLIQKIKQFNIKTKQFANGNYASNDKTFNSPKEIYELNQSFNKMASEITQQMN. In terms of domain architecture, Histidine kinase spans 129–348; sequence NLAHDLKTPL…TMTVTLHKLD (220 aa). At histidine 132 the chain carries Phosphohistidine; by autocatalysis.

Post-translationally, autophosphorylated.

It localises to the cell membrane. The enzyme catalyses ATP + protein L-histidine = ADP + protein N-phospho-L-histidine.. In terms of biological role, member of the two-component regulatory system SaeR/SaeS involved in the regulation of staphylococcal virulence factors in a strain-dependent fashion. Probably functions as a membrane-associated protein kinase that upon sensing the appropriate signal, autophosphorylates and in turn activates the cytosolic response regulator SaeR. The chain is Histidine protein kinase SaeS (saeS) from Staphylococcus aureus (strain bovine RF122 / ET3-1).